The following is a 236-amino-acid chain: Small ribosomal subunit protein eS6 (236 aa).

Belongs to the eukaryotic ribosomal protein eS6 family. As to quaternary structure, component of the small ribosomal subunit. Part of the small subunit (SSU) processome, composed of more than 70 proteins and the RNA chaperone small nucleolar RNA (snoRNA) U3. Ribosomal protein S6 is the major substrate of protein kinases in eukaryote ribosomes.

It localises to the cytoplasm. The protein resides in the nucleus. The protein localises to the nucleolus. Its function is as follows. Component of the 40S small ribosomal subunit. Plays an important role in controlling cell growth and proliferation through the selective translation of particular classes of mRNA. Part of the small subunit (SSU) processome, first precursor of the small eukaryotic ribosomal subunit. During the assembly of the SSU processome in the nucleolus, many ribosome biogenesis factors, an RNA chaperone and ribosomal proteins associate with the nascent pre-rRNA and work in concert to generate RNA folding, modifications, rearrangements and cleavage as well as targeted degradation of pre-ribosomal RNA by the RNA exosome. This chain is Small ribosomal subunit protein eS6 (rps6), found in Dictyostelium discoideum (Social amoeba).